The sequence spans 307 residues: MTETTKTHVILLACGSFNPITKGHIQMFERARDYLHKTGRFIVIGGIVSPVHDSYGKQGLVSSRHRLIMCQLAVQNSDWIRVDPWECYQDTWQTTCSVLEHHRDLMKRVTGCILSNVNTPSMTPVIGQPQHENTQPIYQNSNVPTKPTAAKILGKVGESLSRICCVRPPVERFTFVDENANLGTVMRYEEIELRILLLCGSDLLESFCIPGLWNEADMEVIVGDFGIVVVPRDAADTDRIMNHSSILRKYKNNIMVVKDDINHPMSVVSSTKSRLALQHGDGHVVDYLSQPVIDYILKSQLYINASG.

NAD(+)-binding residues include Ser-16 and Phe-17. ATP is bound at residue His-24. NAD(+) contacts are provided by Trp-92 and Thr-95. 2 S-palmitoyl cysteine lipidation sites follow: Cys-164 and Cys-165. NAD(+)-binding residues include Gly-200, Asp-202, Leu-212, Trp-213, and Arg-232. ATP is bound at residue 271 to 274; it reads TKSR.

It belongs to the eukaryotic NMN adenylyltransferase family. In terms of assembly, monomer. The cofactor is Mg(2+). Post-translationally, degraded in response to injured neurite. Degradation is caused by polyubiquitination by MYCBP2 after recognition by FBXO45. Palmitoylated; palmitoylation is required for membrane association. As to expression, expressed predominantly in the brain and nervous system.

Its subcellular location is the golgi apparatus membrane. The protein localises to the cytoplasmic vesicle membrane. It localises to the cytoplasm. It is found in the cell projection. The protein resides in the axon. The enzyme catalyses beta-nicotinamide D-ribonucleotide + ATP + H(+) = diphosphate + NAD(+). The catalysed reaction is nicotinate beta-D-ribonucleotide + ATP + H(+) = deamido-NAD(+) + diphosphate. Its pathway is cofactor biosynthesis; NAD(+) biosynthesis; NAD(+) from nicotinamide D-ribonucleotide: step 1/1. The protein operates within cofactor biosynthesis; NAD(+) biosynthesis; deamido-NAD(+) from nicotinate D-ribonucleotide: step 1/1. With respect to regulation, inhibited by P1-(adenosine-5')-P3-(nicotinamide-riboside-5')-triphosphate (Np3AD) and P1-(adenosine-5')-P4-(nicotinamide-riboside-5')-tetraphosphate (Np4AD). In terms of biological role, nicotinamide/nicotinate-nucleotide adenylyltransferase that acts as an axon maintenance factor. Axon survival factor required for the maintenance of healthy axons: acts by delaying Wallerian axon degeneration, an evolutionarily conserved process that drives the loss of damaged axons. Catalyzes the formation of NAD(+) from nicotinamide mononucleotide (NMN) and ATP. Can also use the deamidated form; nicotinic acid mononucleotide (NaMN) as substrate but with a lower efficiency. Cannot use triazofurin monophosphate (TrMP) as substrate. Also catalyzes the reverse reaction, i.e. the pyrophosphorolytic cleavage of NAD(+). For the pyrophosphorolytic activity prefers NAD(+), NADH and NaAD as substrates and degrades nicotinic acid adenine dinucleotide phosphate (NHD) less effectively. Fails to cleave phosphorylated dinucleotides NADP(+), NADPH and NaADP(+). Also acts as an activator of ADP-ribosylation by supporting the catalytic activity of PARP16 and promoting mono-ADP-ribosylation of ribosomes by PARP16. May be involved in the maintenance of axonal integrity. This is Nicotinamide/nicotinic acid mononucleotide adenylyltransferase 2 from Mus musculus (Mouse).